Here is a 244-residue protein sequence, read N- to C-terminus: Ubiquinone biosynthesis O-methyltransferase (244 aa).

4 residues coordinate S-adenosyl-L-methionine: arginine 36, glycine 60, aspartate 81, and leucine 123.

This sequence belongs to the methyltransferase superfamily. UbiG/COQ3 family.

The enzyme catalyses a 3-demethylubiquinol + S-adenosyl-L-methionine = a ubiquinol + S-adenosyl-L-homocysteine + H(+). The catalysed reaction is a 3-(all-trans-polyprenyl)benzene-1,2-diol + S-adenosyl-L-methionine = a 2-methoxy-6-(all-trans-polyprenyl)phenol + S-adenosyl-L-homocysteine + H(+). It participates in cofactor biosynthesis; ubiquinone biosynthesis. O-methyltransferase that catalyzes the 2 O-methylation steps in the ubiquinone biosynthetic pathway. The protein is Ubiquinone biosynthesis O-methyltransferase of Rickettsia felis (strain ATCC VR-1525 / URRWXCal2) (Rickettsia azadi).